Here is a 144-residue protein sequence, read N- to C-terminus: Large ribosomal subunit protein uL15 (144 aa).

Residues Met-1–Arg-18 show a composition bias toward basic and acidic residues. The interval Met-1–Gln-58 is disordered. Residues Arg-21–Gly-31 show a composition bias toward gly residues.

The protein belongs to the universal ribosomal protein uL15 family. Part of the 50S ribosomal subunit.

Functionally, binds to the 23S rRNA. This Alcanivorax borkumensis (strain ATCC 700651 / DSM 11573 / NCIMB 13689 / SK2) protein is Large ribosomal subunit protein uL15.